The following is a 141-amino-acid chain: Ribonuclease VapC16 (141 aa).

Residue Asp99 participates in Mg(2+) binding. The interval 99-141 is disordered; sequence DHAHTAHRRASGSPSTSIRPCAHRPGTAAWPDDHHRRRPVSCL.

This sequence belongs to the PINc/VapC protein family. It depends on Mg(2+) as a cofactor.

Its function is as follows. Toxic component of a type II toxin-antitoxin (TA) system. An RNase. The cognate antitoxin is VapB16. The sequence is that of Ribonuclease VapC16 from Mycobacterium tuberculosis (strain ATCC 25618 / H37Rv).